The following is a 91-amino-acid chain: MKLVMLLVVVSAMLVLGGAQTASQFYCGDFLARTMSSLCWSDMQKRSGSQYAGYGWPWLPPFSSSRGKRGIVDECCYRPCTIDVLMSYCDN.

Positions 1–19 (MKLVMLLVVVSAMLVLGGA) are cleaved as a signal peptide. Position 20 is a pyrrolidone carboxylic acid (Gln20). Intrachain disulfides connect Cys27-Cys76, Cys39-Cys89, and Cys75-Cys80. Residues 47–67 (SGSQYAGYGWPWLPPFSSSRG) constitute a propeptide, c peptide like.

This sequence belongs to the insulin family. Heterodimer of a B chain and an A chain linked by two disulfide bonds.

It is found in the secreted. Its function is as follows. Brain peptide responsible for activation of prothoracic glands to produce ecdysone in insects. The sequence is that of Bombyxin C-1 (BBXC1) from Bombyx mori (Silk moth).